The following is a 245-amino-acid chain: Octanoyltransferase (245 aa).

Positions 54–242 (QNAPEQVWLL…AFEQIFGPTI (189 aa)) constitute a BPL/LPL catalytic domain. Residues 93–100 (RGGEFTYH), 173–175 (AIG), and 186–188 (GVS) each bind substrate. C204 functions as the Acyl-thioester intermediate in the catalytic mechanism.

Belongs to the LipB family.

The protein resides in the cytoplasm. It catalyses the reaction octanoyl-[ACP] + L-lysyl-[protein] = N(6)-octanoyl-L-lysyl-[protein] + holo-[ACP] + H(+). The protein operates within protein modification; protein lipoylation via endogenous pathway; protein N(6)-(lipoyl)lysine from octanoyl-[acyl-carrier-protein]: step 1/2. Catalyzes the transfer of endogenously produced octanoic acid from octanoyl-acyl-carrier-protein onto the lipoyl domains of lipoate-dependent enzymes. Lipoyl-ACP can also act as a substrate although octanoyl-ACP is likely to be the physiological substrate. This Bartonella quintana (strain Toulouse) (Rochalimaea quintana) protein is Octanoyltransferase.